Consider the following 242-residue polypeptide: Ribonuclease 3 (242 aa).

In terms of domain architecture, RNase III spans 7–136 (LEALQNLLGY…LLASIYLDGG (130 aa)). Glu-49 contacts Mg(2+). Asp-53 is an active-site residue. 2 residues coordinate Mg(2+): Asp-122 and Glu-125. Glu-125 is an active-site residue. Positions 167-236 (DYKTQLQELT…AEKALQIIAA (70 aa)) constitute a DRBM domain.

It belongs to the ribonuclease III family. As to quaternary structure, homodimer. It depends on Mg(2+) as a cofactor.

It localises to the cytoplasm. The catalysed reaction is Endonucleolytic cleavage to 5'-phosphomonoester.. Its function is as follows. Digests double-stranded RNA. Involved in the processing of primary rRNA transcript to yield the immediate precursors to the large and small rRNAs (23S and 16S). Processes some mRNAs, and tRNAs when they are encoded in the rRNA operon. Processes pre-crRNA and tracrRNA of type II CRISPR loci if present in the organism. The protein is Ribonuclease 3 of Syntrophobacter fumaroxidans (strain DSM 10017 / MPOB).